The following is a 497-amino-acid chain: MAGGITDTGELYSPYVGLVYMFNLIVGTGALTMPKAFATAGWLVSLVLLMFLGFMSYMTTTFVVEAMAAANAQLRWKRMEKRKEDDEDEDSSSGVSDSDVLLRDSYERAETRPILSVQRRGSPNIFEITERVEMGQMASMFFNKVGVNLFYFCIIIYLYGDLAIYAAAVPVSLMQVTCAIGNHSCNVGDGTKYNDTDKCWGPIRRIDAYRLYLAAFTLLLGPFTFFNVQKTKYLQIMTSLMRWIAFILMIILALIRISRGQAEGHPSMAQLSGIRNLFGVCVYSFMCQHSLPSLITPISKKRHVNKLVLLDYILILAFYSLLSFTAIYCFRNDTLMDMYTLNFTNCEIINVAFIRYFLGLFPVFTISTNFPIIAVTLRNNWKTLFHREGGTYPWLVDRIVFPAITLVPPVLVVFCTHDLESLVGITGAYAGNGIQYLIPAFLAYCSRKDTQLVFGSGTVNKHLSPFRHTFWIVFVLIWGFSCFVFVTANIVLSESKL.

Topologically, residues 1-10 are cytoplasmic; sequence MAGGITDTGE. The helical transmembrane segment at 11–31 threads the bilayer; that stretch reads LYSPYVGLVYMFNLIVGTGAL. Residues 32–35 lie on the Extracellular side of the membrane; it reads TMPK. The chain crosses the membrane as a helical span at residues 36–56; it reads AFATAGWLVSLVLLMFLGFMS. At 57–148 the chain is on the cytoplasmic side; that stretch reads YMTTTFVVEA…SMFFNKVGVN (92 aa). Residues 149-169 form a helical membrane-spanning segment; it reads LFYFCIIIYLYGDLAIYAAAV. The Extracellular segment spans residues 170 to 205; it reads PVSLMQVTCAIGNHSCNVGDGTKYNDTDKCWGPIRR. Residue N194 is glycosylated (N-linked (GlcNAc...) asparagine). Residues 206–226 form a helical membrane-spanning segment; it reads IDAYRLYLAAFTLLLGPFTFF. The Cytoplasmic segment spans residues 227–234; the sequence is NVQKTKYL. The chain crosses the membrane as a helical span at residues 235–255; it reads QIMTSLMRWIAFILMIILALI. Residues 256–277 are Extracellular-facing; it reads RISRGQAEGHPSMAQLSGIRNL. The chain crosses the membrane as a helical span at residues 278 to 298; it reads FGVCVYSFMCQHSLPSLITPI. Topologically, residues 299–306 are cytoplasmic; sequence SKKRHVNK. The chain crosses the membrane as a helical span at residues 307–327; that stretch reads LVLLDYILILAFYSLLSFTAI. At 328–356 the chain is on the extracellular side; it reads YCFRNDTLMDMYTLNFTNCEIINVAFIRY. A helical transmembrane segment spans residues 357–377; that stretch reads FLGLFPVFTISTNFPIIAVTL. Residues 378-398 lie on the Cytoplasmic side of the membrane; sequence RNNWKTLFHREGGTYPWLVDR. A helical membrane pass occupies residues 399-419; sequence IVFPAITLVPPVLVVFCTHDL. Over 420–421 the chain is Extracellular; it reads ES. Residues 422 to 442 traverse the membrane as a helical segment; sequence LVGITGAYAGNGIQYLIPAFL. The Cytoplasmic portion of the chain corresponds to 443–471; sequence AYCSRKDTQLVFGSGTVNKHLSPFRHTFW. The chain crosses the membrane as a helical span at residues 472–492; it reads IVFVLIWGFSCFVFVTANIVL. Residues 493–497 are Extracellular-facing; sequence SESKL.

This sequence belongs to the TMEM104 family.

Its subcellular location is the membrane. This is Transmembrane protein 104 (TMEM104) from Gallus gallus (Chicken).